The chain runs to 185 residues: Protein GrpE (185 aa).

Residues 1-37 form a disordered region; sequence MSEEKQTPEQEAEVEAQEEAVQADTEEVTQDEQSAFQ.

This sequence belongs to the GrpE family. As to quaternary structure, homodimer.

Its subcellular location is the cytoplasm. Participates actively in the response to hyperosmotic and heat shock by preventing the aggregation of stress-denatured proteins, in association with DnaK and GrpE. It is the nucleotide exchange factor for DnaK and may function as a thermosensor. Unfolded proteins bind initially to DnaJ; upon interaction with the DnaJ-bound protein, DnaK hydrolyzes its bound ATP, resulting in the formation of a stable complex. GrpE releases ADP from DnaK; ATP binding to DnaK triggers the release of the substrate protein, thus completing the reaction cycle. Several rounds of ATP-dependent interactions between DnaJ, DnaK and GrpE are required for fully efficient folding. The polypeptide is Protein GrpE (Bacillus pumilus (strain SAFR-032)).